Here is a 639-residue protein sequence, read N- to C-terminus: Complex I assembly factor Egm, mitochondrial (639 aa).

Residues 1–26 (MRPNLFSGASRLLTYSRNGKLLTRGR) constitute a mitochondrion transit peptide. The tract at residues 23 to 65 (TRGRSTKATSSSLDSQHQDAATTEGGRAESVEESPEQQRKLPT) is disordered. Residues 28-43 (TKATSSSLDSQHQDAA) are compositionally biased toward polar residues. The segment covering 48–65 (GRAESVEESPEQQRKLPT) has biased composition (basic and acidic residues).

This sequence belongs to the acyl-CoA dehydrogenase family. As to quaternary structure, associates with mitochondrial complex I assembly intermediates during its biogenesis. FAD serves as cofactor.

The protein resides in the mitochondrion. Functionally, as part of the MCIA complex, primarily participates in the assembly of the mitochondrial complex I and therefore plays a role in oxidative phosphorylation. This chain is Complex I assembly factor Egm, mitochondrial, found in Drosophila melanogaster (Fruit fly).